Reading from the N-terminus, the 451-residue chain is Vacuolar cation/proton exchanger 1a (451 aa).

At 1 to 58 the chain is on the cytoplasmic side; it reads MEAAAAMEAGRKLAARHPHGRSRTAHNMSSSSLRKKSDAALVRKVPVAPLRPLLANLQ. The segment at 9–37 is disordered; sequence AGRKLAARHPHGRSRTAHNMSSSSLRKKS. The segment covering 13–24 has biased composition (basic residues); sequence LAARHPHGRSRT. A helical transmembrane segment spans residues 59 to 79; that stretch reads EVFLATKLAVLFPAVPLAIAA. Residues 80–86 are Vacuolar-facing; the sequence is QCFRFDQ. The helical transmembrane segment at 87–107 threads the bilayer; the sequence is VWVFALSLLGLIPLAERVSFL. The Cytoplasmic portion of the chain corresponds to 108–120; that stretch reads TEQIALYTGPTVG. The chain crosses the membrane as a helical span at residues 121-141; it reads GLLNATCGNATELIIALFALL. Positions 128–163 are cation selection; sequence GNATELIIALFALLKGKIEVVKCSLLGSVLSNLLLV. The Vacuolar portion of the chain corresponds to 142–153; it reads KGKIEVVKCSLL. A helical membrane pass occupies residues 154–174; sequence GSVLSNLLLVLGTSLFCGGVV. Residues 175–191 are Cytoplasmic-facing; the sequence is NLGARQPYDRNQSDVST. A helical membrane pass occupies residues 192-212; sequence ALLFLAVLCHSAPLLLRYAVA. At 213 to 228 the chain is on the vacuolar side; that stretch reads AGEHSVSATSAAASLD. The helical transmembrane segment at 229-249 threads the bilayer; that stretch reads LSRACSFVMLASYVAYLFFQL. At 250–273 the chain is on the cytoplasmic side; the sequence is KTHRQLFEPQEVDGGDAGDDDEEP. A helical membrane pass occupies residues 274–294; that stretch reads ALGFASALFWLALMTAVISVL. The Vacuolar portion of the chain corresponds to 295–317; that stretch reads SEYVVGTIEPTSQSWGLSVSFIS. A helical transmembrane segment spans residues 318-338; it reads IILLPIVGNAAEHAGAIIFAL. The segment at 325-360 is cation selection; the sequence is GNAAEHAGAIIFALKNKLDITLGVALGSATQISMFV. Topologically, residues 339-352 are cytoplasmic; the sequence is KNKLDITLGVALGS. A helical membrane pass occupies residues 353 to 373; it reads ATQISMFVVPLSVLVAWIMGV. The Vacuolar segment spans residues 374 to 378; that stretch reads QMDLD. Residues 379-399 form a helical membrane-spanning segment; sequence FKLLETGSLFMAVLVTAFTLQ. Residues 400 to 404 lie on the Cytoplasmic side of the membrane; sequence DGTSH. A helical transmembrane segment spans residues 405 to 425; the sequence is YLKGILLLLCYIVIGACFFVA. The Vacuolar portion of the chain corresponds to 426-451; that stretch reads RQPAGHANSNGALLDVPTGSMSVQAA.

The protein belongs to the Ca(2+):cation antiporter (CaCA) (TC 2.A.19) family. Cation/proton exchanger (CAX) subfamily. As to expression, ubiquitous.

It localises to the vacuole membrane. Functionally, vacuolar cation/proton exchanger (CAX). Translocates Ca(2+) and other metal ions into vacuoles using the proton gradient formed by H(+)-ATPase and H(+)-pyrophosphatase. In Oryza sativa subsp. japonica (Rice), this protein is Vacuolar cation/proton exchanger 1a (CAX1a).